The sequence spans 373 residues: SUN domain-containing protein 5 (373 aa).

Residues 1 to 103 lie on the Nuclear side of the membrane; that stretch reads MPRTRNIGAL…LFCQKVMEKM (103 aa). A helical membrane pass occupies residues 104–120; sequence GLLVLCVFGFWMFSMHL. Residues 121-373 are Perinuclear space-facing; it reads PSKVEVWQDD…PKDSHLEPLS (253 aa). A coiled-coil region spans residues 136-180; the sequence is LQSLRMYQEKVRHHTGEIQDLRGSMNQLIAKLQKMEAISDEQKMA. An SUN domain is found at 204–362; that stretch reads ASIDFEHTSA…YRVRVHGSVT (159 aa).

As to quaternary structure, probable homotrimer. Interacts with DNAJB13. In terms of processing, highly glycosylated in the Golgi apparatus during spermiogenesis. Testis-specific, abundantly expressed in spermatocytes and round spermatids.

Its subcellular location is the nucleus inner membrane. The protein localises to the golgi apparatus. In terms of biological role, plays an essential role in anchoring sperm head to the tail. Is responsible for the attachment of the coupling apparatus to the sperm nuclear envelope. In Mus musculus (Mouse), this protein is SUN domain-containing protein 5 (Sun5).